An 807-amino-acid polypeptide reads, in one-letter code: Zinc finger protein 594 (807 aa).

The disordered stretch occupies residues 1–23 (MKEWKSKMEISEEKKSARAASEK). 8 consecutive C2H2-type zinc fingers follow at residues 127–149 (YECKECEKTFNRSSNLIIHQRIH), 155–177 (YVCNECGKDSNQSSNLIIHQRIH), 183–205 (YICHECGKDFNQSSNLVRHKQIH), 211–233 (YECKECGKAFKGSSNLVLHQRIH), 239–261 (YLCNKCGKAFSQSTDLIIHHRIH), 267–289 (YECYDCGQMFSQSSHLVPHQRIH), 295–317 (LKCNECEKAFRQHSHLTEHQRLH), and 323–345 (YECHRCGKTFSGRTAFLKHQRLH). The C2H2-type 9; degenerate zinc finger occupies 348-370 (EKIEECEKTFSKDEELREEQRIH). 6 consecutive C2H2-type zinc fingers follow at residues 376–398 (YWCNQCGRNFQGTSDLIRHQVTH), 404–426 (YECKECGKTFNQSSDLLRHHRIH), 432–454 (CVCSKCGKSFRGSSDLIRHHRVH), 460–482 (YECSECGKAFSQRSHLVTHQKIH), 488–510 (YQCTECGKAFRRRSLLIQHRRIH), and 516–538 (YECKECGKLFIWRTAFLKHQSLH). The C2H2-type 16; degenerate zinc-finger motif lies at 543-562 (LECEKTFSQDEELRGEQKIH). C2H2-type zinc fingers lie at residues 568–590 (YWCNQCGRAFQGSSDLIRHQVTH), 596–618 (YECKECGKTFNQSSDLLRHHRIH), 624–646 (YVCNKCGKSFRGSSDLIKHHRIH), 652–674 (YECSECGKAFSQRSHLATHQKIH), 680–702 (YQCSECGNAFRRRSLLIQHRRLH), and 708–730 (YECKECGKLFMWHTAFLKHQRLH). The segment at 733–755 (EKLEECEKTFSKDEELRKEQRTH) adopts a C2H2-type 23; degenerate zinc-finger fold. The segment at 761-783 (YWCNQCSRTFQGSSDLIRHQVTH) adopts a C2H2-type 24 zinc-finger fold.

The protein belongs to the krueppel C2H2-type zinc-finger protein family.

It localises to the nucleus. May be involved in transcriptional regulation. The sequence is that of Zinc finger protein 594 (ZNF594) from Homo sapiens (Human).